The primary structure comprises 555 residues: AP2-like ethylene-responsive transcription factor ANT (555 aa).

Disordered stretches follow at residues 34–56 (GGREAIYSSSTSSAATSSSSVPP) and 199–231 (LSMSPGSQSSCITGSHHHQQNQNQNHQSQNHQQ). 3 stretches are compositionally biased toward low complexity: residues 41–53 (SSSTSSAATSSSS), 199–208 (LSMSPGSQSS), and 218–231 (QNQNQNHQSQNHQQ). 2 consecutive DNA-binding regions (AP2/ERF) follow at residues 283–349 (QYRG…TNFS) and 385–443 (IYRG…TNFD).

Belongs to the AP2/ERF transcription factor family. AP2 subfamily. Interacts with ANL2, HDG2 and HDG10, and possibly with GL2, HDG3, HDG8, ATML1 and PDF2. As to expression, mostly expressed in developing flowers. Also present in mature flowers, siliques and seedlings, but not in mature roots, leaves and stems. Expressed in ovules and in vegetative and floral primordia.

The protein localises to the nucleus. Its function is as follows. Transcription activator that recognizes and binds to the DNA consensus sequence 5'-CAC[AG]N[AT]TNCCNANG-3'. Required for the initiation and growth of ovules integumenta, and for the development of female gametophyte. Plays a critical role in the development of gynoecium marginal tissues (e.g. stigma, style and septa), and in the fusion of carpels and of medial ridges leading to ovule primordia. Also involved in organs initiation and development, including floral organs. Maintains the meristematic competence of cells and consequently sustains expression of cell cycle regulators during organogenesis, thus controlling the final size of each organ by controlling their cell number. Regulates INO autoinduction and expression pattern. As ANT promotes petal cell identity and mediates down-regulation of AG in flower whorl 2, it functions as a class A homeotic gene. The protein is AP2-like ethylene-responsive transcription factor ANT of Arabidopsis thaliana (Mouse-ear cress).